Reading from the N-terminus, the 362-residue chain is 3-isopropylmalate dehydrogenase (362 aa).

Gly-77–Glu-88 provides a ligand contact to NAD(+). Substrate is bound by residues Arg-95, Arg-105, Arg-134, and Asp-223. Mg(2+) is bound by residues Asp-223, Asp-248, and Asp-252. NAD(+) is bound at residue Gly-287–Asn-298.

Belongs to the isocitrate and isopropylmalate dehydrogenases family. Homodimer. Mg(2+) is required as a cofactor. It depends on Mn(2+) as a cofactor.

It is found in the cytoplasm. The enzyme catalyses (2R,3S)-3-isopropylmalate + NAD(+) = 4-methyl-2-oxopentanoate + CO2 + NADH. It participates in amino-acid biosynthesis; L-leucine biosynthesis; L-leucine from 3-methyl-2-oxobutanoate: step 3/4. Its function is as follows. Catalyzes the oxidation of 3-carboxy-2-hydroxy-4-methylpentanoate (3-isopropylmalate) to 3-carboxy-4-methyl-2-oxopentanoate. The product decarboxylates to 4-methyl-2 oxopentanoate. The polypeptide is 3-isopropylmalate dehydrogenase (LEU2) (Kluyveromyces lactis (strain ATCC 8585 / CBS 2359 / DSM 70799 / NBRC 1267 / NRRL Y-1140 / WM37) (Yeast)).